The sequence spans 238 residues: Sarcospan (238 aa).

The disordered stretch occupies residues 1 to 33 (MGKDRQPRGQQRQGDAAGPDDPGPKKGAGTREQ). At 1-48 (MGKDRQPRGQQRQGDAAGPDDPGPKKGAGTREQRGEEEAQTCCGCRFP) the chain is on the extracellular side. Residues 8 to 20 (RGQQRQGDAAGPD) show a composition bias toward low complexity. The helical transmembrane segment at 49-69 (LLLALLQLALGVAVTVVGFLM) threads the bilayer. The Cytoplasmic segment spans residues 70 to 81 (ASVSSSLLVRAT). Residues 82–102 (PYWAGIIVCVVAYLGLFMLCV) traverse the membrane as a helical segment. Topologically, residues 103 to 117 (SYQVDERTCIQFSMK) are cytoplasmic. The helical transmembrane segment at 118 to 138 (LLYFVLSALGLVVCVLAVAFA) threads the bilayer. The Extracellular segment spans residues 139–188 (AHHYSLLTHLTCENAPDSCQCKLPSSEPLSRTFVYRDVTDCTSITGTFQV). The helical transmembrane segment at 189–209 (FLLVQMVLNLVCGLVCLVACF) threads the bilayer. Over 210-238 (VMWKHRYQVFYVGVRMCPLSASEGQQQKV) the chain is Cytoplasmic.

It localises to the cell membrane. Its subcellular location is the sarcolemma. The protein localises to the postsynaptic cell membrane. In terms of biological role, component of the dystrophin-glycoprotein complex (DGC), a complex that spans the muscle plasma membrane and forms a link between the F-actin cytoskeleton and the extracellular matrix. Preferentially associates with the sarcoglycan subcomplex of the DGC. The sequence is that of Sarcospan (SSPN) from Oryctolagus cuniculus (Rabbit).